Consider the following 93-residue polypeptide: Alpha-defensin 1 (93 aa).

Residues 1–19 (MKKLVLLFALVLLGFQVQA) form the signal peptide. Residues 20-58 (DSIQNTDEETKTEEQPGEEDQAVSVSFGDPEGTSLQEES) constitute a propeptide that is removed on maturation. The disordered stretch occupies residues 24 to 54 (NTDEETKTEEQPGEEDQAVSVSFGDPEGTSL). Disulfide bonds link Cys64–Cys92, Cys66–Cys81, and Cys71–Cys91.

It belongs to the alpha-defensin family. As to expression, paneth cells of the small bowel.

The protein localises to the secreted. Its function is as follows. Probably contributes to the antimicrobial barrier function of the small bowel mucosa. Has antibacterial activity against attenuated mutants of S.typhimurium. The polypeptide is Alpha-defensin 1 (Defa1) (Mus musculus (Mouse)).